We begin with the raw amino-acid sequence, 235 residues long: uncharacterized protein (235 aa).

A disordered region spans residues 1 to 98 (MDTKLSVTGA…NKKNTLHYSK (98 aa)). Glycyl lysine isopeptide (Lys-Gly) (interchain with G-Cter in ubiquitin) cross-links involve residues lysine 16 and lysine 35. A compositionally biased stretch (basic residues) spans 38 to 50 (NGNKKRNKNRNRN). The segment covering 51-60 (KKTETKEQNE) has biased composition (basic and acidic residues).

This is an uncharacterized protein from Saccharomyces cerevisiae (strain ATCC 204508 / S288c) (Baker's yeast).